The chain runs to 341 residues: S-adenosylmethionine:tRNA ribosyltransferase-isomerase (341 aa).

It belongs to the QueA family. In terms of assembly, monomer.

The protein resides in the cytoplasm. The catalysed reaction is 7-aminomethyl-7-carbaguanosine(34) in tRNA + S-adenosyl-L-methionine = epoxyqueuosine(34) in tRNA + adenine + L-methionine + 2 H(+). It participates in tRNA modification; tRNA-queuosine biosynthesis. In terms of biological role, transfers and isomerizes the ribose moiety from AdoMet to the 7-aminomethyl group of 7-deazaguanine (preQ1-tRNA) to give epoxyqueuosine (oQ-tRNA). This chain is S-adenosylmethionine:tRNA ribosyltransferase-isomerase, found in Acetivibrio thermocellus (strain ATCC 27405 / DSM 1237 / JCM 9322 / NBRC 103400 / NCIMB 10682 / NRRL B-4536 / VPI 7372) (Clostridium thermocellum).